A 113-amino-acid polypeptide reads, in one-letter code: Putative pterin-4-alpha-carbinolamine dehydratase (113 aa).

This sequence belongs to the pterin-4-alpha-carbinolamine dehydratase family.

It catalyses the reaction (4aS,6R)-4a-hydroxy-L-erythro-5,6,7,8-tetrahydrobiopterin = (6R)-L-erythro-6,7-dihydrobiopterin + H2O. This chain is Putative pterin-4-alpha-carbinolamine dehydratase, found in Nitrosomonas europaea (strain ATCC 19718 / CIP 103999 / KCTC 2705 / NBRC 14298).